The chain runs to 292 residues: Ribosomal protein L11 methyltransferase (292 aa).

S-adenosyl-L-methionine-binding residues include T144, G165, D187, and N229.

Belongs to the methyltransferase superfamily. PrmA family.

Its subcellular location is the cytoplasm. It carries out the reaction L-lysyl-[protein] + 3 S-adenosyl-L-methionine = N(6),N(6),N(6)-trimethyl-L-lysyl-[protein] + 3 S-adenosyl-L-homocysteine + 3 H(+). Methylates ribosomal protein L11. The protein is Ribosomal protein L11 methyltransferase of Pseudomonas fluorescens (strain ATCC BAA-477 / NRRL B-23932 / Pf-5).